Reading from the N-terminus, the 147-residue chain is Globin (147 aa).

The residue at position 2 (serine 2) is an N-acetylserine. A Globin domain is found at 2 to 147 (SLSAAEADLA…IIDALKAAGK (146 aa)). Heme b is bound at residue histidine 96.

Belongs to the globin family. In terms of assembly, monomer.

The protein is Globin of Aplysia limacina (Sea hare).